Reading from the N-terminus, the 150-residue chain is Large ribosomal subunit protein bL9 (150 aa).

The protein belongs to the bacterial ribosomal protein bL9 family.

Binds to the 23S rRNA. This Wigglesworthia glossinidia brevipalpis protein is Large ribosomal subunit protein bL9.